A 359-amino-acid polypeptide reads, in one-letter code: Histidinol-phosphate aminotransferase (359 aa).

Lys-217 bears the N6-(pyridoxal phosphate)lysine mark.

This sequence belongs to the class-II pyridoxal-phosphate-dependent aminotransferase family. Histidinol-phosphate aminotransferase subfamily. In terms of assembly, homodimer. Pyridoxal 5'-phosphate is required as a cofactor.

The enzyme catalyses L-histidinol phosphate + 2-oxoglutarate = 3-(imidazol-4-yl)-2-oxopropyl phosphate + L-glutamate. It participates in amino-acid biosynthesis; L-histidine biosynthesis; L-histidine from 5-phospho-alpha-D-ribose 1-diphosphate: step 7/9. This chain is Histidinol-phosphate aminotransferase, found in Salmonella typhi.